Reading from the N-terminus, the 104-residue chain is Urease subunit beta (104 aa).

The protein belongs to the urease beta subunit family. Heterotrimer of UreA (gamma), UreB (beta) and UreC (alpha) subunits. Three heterotrimers associate to form the active enzyme.

The protein resides in the cytoplasm. The enzyme catalyses urea + 2 H2O + H(+) = hydrogencarbonate + 2 NH4(+). The protein operates within nitrogen metabolism; urea degradation; CO(2) and NH(3) from urea (urease route): step 1/1. This chain is Urease subunit beta, found in Rhodopseudomonas palustris (strain BisB5).